A 532-amino-acid chain; its full sequence is Phosphoenolpyruvate carboxykinase (ATP) (532 aa).

Substrate is bound by residues Arg60, Tyr200, and Lys206. Residues Lys206, His225, and 242–250 (GLSGTGKTT) each bind ATP. Residues Lys206 and His225 each contribute to the Mn(2+) site. Ser244 contacts substrate. Residue Asp263 participates in Mn(2+) binding. ATP contacts are provided by residues Glu291, Arg327, 443 to 444 (RI), and Thr449. Residue Arg327 participates in substrate binding.

It belongs to the phosphoenolpyruvate carboxykinase (ATP) family. Monomer. Requires Mn(2+) as cofactor.

The protein resides in the cytoplasm. The catalysed reaction is oxaloacetate + ATP = phosphoenolpyruvate + ADP + CO2. It functions in the pathway carbohydrate biosynthesis; gluconeogenesis. With respect to regulation, inhibited by p-chloromercuribenzoate. Its function is as follows. Involved in gluconeogenesis. Catalyzes the conversion of oxaloacetate (OAA) to phosphoenolpyruvate (PEP) through direct phosphoryl transfer between the nucleoside triphosphate and OAA. The polypeptide is Phosphoenolpyruvate carboxykinase (ATP) (Anaerobiospirillum succiniciproducens).